Reading from the N-terminus, the 447-residue chain is uncharacterized protein (447 aa).

The interval 392 to 435 is disordered; it reads RFTKPSSSVAKSTSPSLRNSGSDESDLNQSDSDKEDERVVPVPK. Positions 395 to 407 are enriched in low complexity; sequence KPSSSVAKSTSPS. The segment covering 408 to 421 has biased composition (polar residues); sequence LRNSGSDESDLNQS.

This is an uncharacterized protein from Invertebrate iridescent virus 3 (IIV-3).